The following is a 633-amino-acid chain: MGLLNSSDKEIIKRALPKASNKIIDVTVARLYIAYPDKNEWQYTGLSGALALVDDLVGNTFFLKLVDINGHRGVIWDQELYVNFEYYQDRTFFHTFEMEECFAGLLFVDINEASHFLKRVQKRERYANRKTLLNKNAVALTKKVREEQKSQVVHGPRGESLIDNQRKRYNYEDVDTIPTTKHKAPPPPPPTAETFDSDQTSSFSDINSTTASAPTTPAPALPPASPEVRKEETHPKHSLPPLPNQFAPLPDPPQHNSPPQNNAPSQPQSNPFPFPIPEIPSTQSATNPFPFPVPQQQFNQAPSMGIPQQNRPLPQLPNRNNRPVPPPPPMRTTTEGSGVRLPAPPPPPRRGPAPPPPPHRHVTSNTLNSAGGNSLLPQATGRRGPAPPPPPRASRPTPNVTMQQNPQQYNNSNRPFGYQTNSNMSSPPPPPVTTFNTLTPQMTAATGQPAVPLPQNTQAPSQATNVPVAPPPPPASLGQSQIPQSAPSAPIPPTLPSTTSAAPPPPPAFLTQQPQSGGAPAPPPPPQMPATSTSGGGSFAETTGDAGRDALLASIRGAGGIGALRKVDKSQLDKPSVLLQEARGESASPPAAAGNGGTPGGPPASLADALAAALNKRKTKVGAHDDMDNGDDW.

The region spanning 16–127 (LPKASNKIID…KRVQKRERYA (112 aa)) is the WH1 domain. Disordered regions lie at residues 145–545 (REEQ…TTGD) and 563–606 (ALRK…PASL). Residues 192–215 (AETFDSDQTSSFSDINSTTASAPT) show a composition bias toward low complexity. 2 stretches are compositionally biased toward pro residues: residues 216-225 (TPAPALPPAS) and 238-256 (SLPP…PQHN). 2 stretches are compositionally biased toward low complexity: residues 257–269 (SPPQ…QPQS) and 307–322 (PQQN…RNNR). Threonine 334 is modified (phosphothreonine). Serine 337 bears the Phosphoserine mark. Residues 342–357 (PAPPPPPRRGPAPPPP) show a composition bias toward pro residues. Composition is skewed to polar residues over residues 363–376 (TSNT…NSLL), 399–414 (NVTM…NSNR), and 454–465 (PQNTQAPSQATN). Positions 479–488 (QSQIPQSAPS) are enriched in low complexity. Residues 547–567 (GRDALLASIRGAGGIGALRKV) form the WH2 domain. The residue at position 588 (serine 588) is a Phosphoserine.

Interacts with KRE6, LSB3, LSB5 and YSC84.

This chain is Proline-rich protein LAS17 (LAS17), found in Saccharomyces cerevisiae (strain ATCC 204508 / S288c) (Baker's yeast).